The following is a 172-amino-acid chain: NAD(P)H-quinone oxidoreductase subunit J (172 aa).

Belongs to the complex I 30 kDa subunit family. NDH-1 can be composed of about 15 different subunits; different subcomplexes with different compositions have been identified which probably have different functions.

Its subcellular location is the cellular thylakoid membrane. The catalysed reaction is a plastoquinone + NADH + (n+1) H(+)(in) = a plastoquinol + NAD(+) + n H(+)(out). It catalyses the reaction a plastoquinone + NADPH + (n+1) H(+)(in) = a plastoquinol + NADP(+) + n H(+)(out). Functionally, NDH-1 shuttles electrons from an unknown electron donor, via FMN and iron-sulfur (Fe-S) centers, to quinones in the respiratory and/or the photosynthetic chain. The immediate electron acceptor for the enzyme in this species is believed to be plastoquinone. Couples the redox reaction to proton translocation, and thus conserves the redox energy in a proton gradient. Cyanobacterial NDH-1 also plays a role in inorganic carbon-concentration. This Synechococcus sp. (strain ATCC 27144 / PCC 6301 / SAUG 1402/1) (Anacystis nidulans) protein is NAD(P)H-quinone oxidoreductase subunit J.